We begin with the raw amino-acid sequence, 71 residues long: Kunitz-type serine protease inhibitor HNTX-852 (71 aa).

The N-terminal stretch at 1-22 (DPSGSPHIRILPQETFEDICRL) is a signal peptide. Intrachain disulfides connect C20–C68 and C43–C64. The region spanning 23–68 (PSDSGDCLRFFEMWYFDGTTCTKFVYGGYGGNDNRFPTEKACMKRC) is the BPTI/Kunitz inhibitor domain.

The protein belongs to the venom Kunitz-type family. 03 (sub-Kunitz) subfamily. In terms of tissue distribution, expressed by the venom gland.

It is found in the secreted. In terms of biological role, serine protease inhibitor that inhibits trypsin at a molar ratio of 1:1. The protein is Kunitz-type serine protease inhibitor HNTX-852 of Cyriopagopus hainanus (Chinese bird spider).